The primary structure comprises 172 residues: S-ribosylhomocysteine lyase (172 aa).

Fe cation is bound by residues histidine 54, histidine 58, and cysteine 128.

Belongs to the LuxS family. As to quaternary structure, homodimer. Requires Fe cation as cofactor.

It carries out the reaction S-(5-deoxy-D-ribos-5-yl)-L-homocysteine = (S)-4,5-dihydroxypentane-2,3-dione + L-homocysteine. Its function is as follows. Involved in the synthesis of autoinducer 2 (AI-2) which is secreted by bacteria and is used to communicate both the cell density and the metabolic potential of the environment. The regulation of gene expression in response to changes in cell density is called quorum sensing. Catalyzes the transformation of S-ribosylhomocysteine (RHC) to homocysteine (HC) and 4,5-dihydroxy-2,3-pentadione (DPD). In Aliivibrio fischeri (strain MJ11) (Vibrio fischeri), this protein is S-ribosylhomocysteine lyase.